A 331-amino-acid polypeptide reads, in one-letter code: Beta-ketoacyl-[acyl-carrier-protein] synthase III (331 aa).

Active-site residues include Cys113 and His253. The ACP-binding stretch occupies residues 254–258; that stretch reads QANTR. Asn283 is an active-site residue.

The protein belongs to the thiolase-like superfamily. FabH family. As to quaternary structure, homodimer.

It is found in the cytoplasm. It carries out the reaction malonyl-[ACP] + acetyl-CoA + H(+) = 3-oxobutanoyl-[ACP] + CO2 + CoA. It functions in the pathway lipid metabolism; fatty acid biosynthesis. Functionally, catalyzes the condensation reaction of fatty acid synthesis by the addition to an acyl acceptor of two carbons from malonyl-ACP. Catalyzes the first condensation reaction which initiates fatty acid synthesis and may therefore play a role in governing the total rate of fatty acid production. Possesses both acetoacetyl-ACP synthase and acetyl transacylase activities. Its substrate specificity determines the biosynthesis of branched-chain and/or straight-chain of fatty acids. This is Beta-ketoacyl-[acyl-carrier-protein] synthase III from Desulfitobacterium hafniense (strain DSM 10664 / DCB-2).